A 296-amino-acid polypeptide reads, in one-letter code: Homoserine kinase (296 aa).

86-96 (KAGSGLGSSAA) provides a ligand contact to ATP.

The protein belongs to the GHMP kinase family. Homoserine kinase subfamily.

Its subcellular location is the cytoplasm. The enzyme catalyses L-homoserine + ATP = O-phospho-L-homoserine + ADP + H(+). It participates in amino-acid biosynthesis; L-threonine biosynthesis; L-threonine from L-aspartate: step 4/5. Its function is as follows. Catalyzes the ATP-dependent phosphorylation of L-homoserine to L-homoserine phosphate. In Methanocaldococcus jannaschii (strain ATCC 43067 / DSM 2661 / JAL-1 / JCM 10045 / NBRC 100440) (Methanococcus jannaschii), this protein is Homoserine kinase (thrB).